We begin with the raw amino-acid sequence, 996 residues long: Poly [ADP-ribose] polymerase (996 aa).

A DNA-binding region spans residues 1 to 369 (MEIDLPFKVE…TSTILKNISL (369 aa)). 2 PARP-type zinc fingers span residues 7–89 (FKVE…DNCT) and 114–203 (FGIE…PVIK). Cys19, Cys22, His51, Cys54, Cys126, Cys129, His161, and Cys164 together coordinate Zn(2+). 2 consecutive short sequence motifs (nuclear localization signal) follow at residues 211-214 (KKAK) and 232-235 (KIKK). The 139-residue stretch at 220 to 358 (EEDAASIKEL…EVRAIRYIPP (139 aa)) folds into the PADR1 zinc-binding domain. The interval 286-329 (GALLPCTDCKGRQLLFHKSGYLCNGDLTEWTKCTKLLKEPERKS) is zinc ribbon. 4 residues coordinate Zn(2+): Cys291, Cys294, Cys308, and Cys318. The interval 370 to 507 (KKGDELDGPK…SIYTKSVPKS (138 aa)) is automodification domain. One can recognise a BRCT domain in the interval 382–473 (RERPPLYNIE…AGAINYISSM (92 aa)). In terms of domain architecture, WGR spans 527 to 625 (VAHVYVSRNK…ENFVKVAGRM (99 aa)). In terms of domain architecture, PARP alpha-helical spans 647–764 (KSKLPLSVQD…EIECAYSLLQ (118 aa)). The PARP catalytic domain maps to 773–996 (NPIDKHYEQL…YMLRMNFKYK (224 aa)).

It belongs to the ARTD/PARP family.

The protein resides in the nucleus. The enzyme catalyses NAD(+) + (ADP-D-ribosyl)n-acceptor = nicotinamide + (ADP-D-ribosyl)n+1-acceptor + H(+).. The catalysed reaction is L-aspartyl-[protein] + NAD(+) = 4-O-(ADP-D-ribosyl)-L-aspartyl-[protein] + nicotinamide. It carries out the reaction L-glutamyl-[protein] + NAD(+) = 5-O-(ADP-D-ribosyl)-L-glutamyl-[protein] + nicotinamide. Its function is as follows. Poly-ADP-ribosyltransferase that mediates poly-ADP-ribosylation of proteins and plays a key role in DNA repair. Mainly mediates glutamate and aspartate ADP-ribosylation of target proteins: the ADP-D-ribosyl group of NAD(+) is transferred to the acceptor carboxyl group of glutamate and aspartate residues and further ADP-ribosyl groups are transferred to the 2'-position of the terminal adenosine moiety, building up a polymer with an average chain length of 20-30 units. The polypeptide is Poly [ADP-ribose] polymerase (Sarcophaga peregrina (Flesh fly)).